The chain runs to 416 residues: Formyl-CoA:oxalate CoA-transferase (416 aa).

Residues 17 to 18 (QS), Arg38, 72 to 75 (LNTK), 96 to 98 (NFH), His104, and 137 to 140 (KAYE) contribute to the CoA site. The active-site Nucleophile is the Asp169. 248–250 (GGQ) provides a ligand contact to substrate. A CoA-binding site is contributed by 273-275 (QEQ).

This sequence belongs to the CoA-transferase III family. Frc subfamily. Homodimer.

It catalyses the reaction formyl-CoA + oxalate = oxalyl-CoA + formate. Its pathway is metabolic intermediate degradation; oxalate degradation; CO(2) and formate from oxalate: step 1/2. In terms of biological role, involved in the catabolism of oxalate and in the adapatation to low pH via the induction of the oxalate-dependent acid tolerance response (ATR). Catalyzes the transfer of the CoA moiety from formyl-CoA to oxalate. This is Formyl-CoA:oxalate CoA-transferase from Shigella sonnei (strain Ss046).